A 638-amino-acid polypeptide reads, in one-letter code: 1-deoxy-D-xylulose-5-phosphate synthase (638 aa).

Residues His-75 and 116-118 (AHS) contribute to the thiamine diphosphate site. Residue Asp-147 participates in Mg(2+) binding. Thiamine diphosphate is bound by residues 148–149 (GA), Asn-177, Tyr-288, and Glu-370. Mg(2+) is bound at residue Asn-177.

Belongs to the transketolase family. DXPS subfamily. Homodimer. Mg(2+) is required as a cofactor. Requires thiamine diphosphate as cofactor.

The catalysed reaction is D-glyceraldehyde 3-phosphate + pyruvate + H(+) = 1-deoxy-D-xylulose 5-phosphate + CO2. It functions in the pathway metabolic intermediate biosynthesis; 1-deoxy-D-xylulose 5-phosphate biosynthesis; 1-deoxy-D-xylulose 5-phosphate from D-glyceraldehyde 3-phosphate and pyruvate: step 1/1. Catalyzes the acyloin condensation reaction between C atoms 2 and 3 of pyruvate and glyceraldehyde 3-phosphate to yield 1-deoxy-D-xylulose-5-phosphate (DXP). The polypeptide is 1-deoxy-D-xylulose-5-phosphate synthase (Cupriavidus necator (strain ATCC 17699 / DSM 428 / KCTC 22496 / NCIMB 10442 / H16 / Stanier 337) (Ralstonia eutropha)).